We begin with the raw amino-acid sequence, 348 residues long: VIP36-like protein (348 aa).

The signal sequence occupies residues 1-38; sequence MAATLGPLGSWQQWRRCLLARDGSRMLLLLLLLGSGQG. Topologically, residues 39–313 are lumenal; the sequence is PQQVGAGQTF…APLPPLSGLA (275 aa). One can recognise an L-type lectin-like domain in the interval 49–274; it reads EYLKREHSLS…DVISLKLFEL (226 aa). A carbohydrate-binding residues include S93 and D128. Residues D159, Y161, and N163 each coordinate Ca(2+). A carbohydrate is bound at residue 161–163; it reads YPN. A glycan (N-linked (GlcNAc...) asparagine) is linked at N181. H188 provides a ligand contact to a carbohydrate. Residue D191 coordinates Ca(2+). A disulfide bridge links C200 with C237. Residue 258 to 260 coordinates a carbohydrate; that stretch reads GDL. A helical membrane pass occupies residues 314–334; it reads LFHIVFFSLVIFVFAIVIGII. The Cytoplasmic segment spans residues 335–348; that stretch reads LYNKWQEQSRKRFY. Positions 344-346 match the Endoplasmic reticulum retention signal motif; that stretch reads RKR.

The protein localises to the endoplasmic reticulum membrane. Its subcellular location is the golgi apparatus membrane. In terms of biological role, may be involved in the regulation of export from the endoplasmic reticulum of a subset of glycoproteins. May function as a regulator of ERGIC-53. This Pongo abelii (Sumatran orangutan) protein is VIP36-like protein (LMAN2L).